Consider the following 76-residue polypeptide: UPF0291 protein GK1331 (76 aa).

The segment at 57-76 is disordered; the sequence is PSGNDVTPKKLKESQRRRFH. Residues 63 to 76 show a composition bias toward basic and acidic residues; that stretch reads TPKKLKESQRRRFH.

It belongs to the UPF0291 family.

The protein localises to the cytoplasm. The polypeptide is UPF0291 protein GK1331 (Geobacillus kaustophilus (strain HTA426)).